A 494-amino-acid chain; its full sequence is Sugar phosphate exchanger 3 (494 aa).

A helical transmembrane segment spans residues 16–36; the sequence is FSHHHVVVFLLTFFSYSLLHA. An N-linked (GlcNAc...) asparagine glycan is attached at asparagine 58. Transmembrane regions (helical) follow at residues 81–101, 113–133, 147–167, 177–197, and 209–229; these read TLFL…GLFI, WVLS…GALT, LWIV…AVMG, VVFG…ACLA, and FLVT…GLLV. Asparagine 266 carries N-linked (GlcNAc...) asparagine glycosylation. Helical transmembrane passes span 297–317, 333–353, 357–377, 386–406, 428–448, and 452–472; these read LAYA…PFYL, IWYD…SDVL, APVL…YSRS, LLMT…SSAI, GIVD…VSLI, and LGWM…IVFI.

Belongs to the major facilitator superfamily. Organophosphate:Pi antiporter (OPA) (TC 2.A.1.4) family. As to quaternary structure, interacts with ATRAID; the interaction is direct and both proteins are mutually dependent for their stability. In terms of processing, glycosylated. Expressed in liver, kidney, intestine and pancreas.

The protein resides in the endoplasmic reticulum membrane. The protein localises to the lysosome membrane. Its function is as follows. Unlike the other SLC37 members, lacks glucose-6-phosphate antiporter activity. In osteoclasts, forms a transporter complex with ATRAID for nitrogen-containing-bisphophonates (N-BPs) required for releasing N-BP molecules that have trafficked to lysosomes through fluid-phase endocytosis into the cytosol. The polypeptide is Sugar phosphate exchanger 3 (Homo sapiens (Human)).